The chain runs to 189 residues: Threonylcarbamoyl-AMP synthase (189 aa).

The region spanning 6–189 is the YrdC-like domain; it reads TAIFTPIIDA…VLTGEQIRQG (184 aa).

It belongs to the SUA5 family. TsaC subfamily.

It localises to the cytoplasm. The catalysed reaction is L-threonine + hydrogencarbonate + ATP = L-threonylcarbamoyladenylate + diphosphate + H2O. Required for the formation of a threonylcarbamoyl group on adenosine at position 37 (t(6)A37) in tRNAs that read codons beginning with adenine. Catalyzes the conversion of L-threonine, HCO(3)(-)/CO(2) and ATP to give threonylcarbamoyl-AMP (TC-AMP) as the acyladenylate intermediate, with the release of diphosphate. This is Threonylcarbamoyl-AMP synthase from Serratia proteamaculans (strain 568).